Consider the following 203-residue polypeptide: Proteasome subunit beta 1 (203 aa).

The propeptide at 1-7 is removed in mature form; by autocatalysis; it reads MAEKLKG. Residue threonine 8 is the Nucleophile of the active site.

This sequence belongs to the peptidase T1B family. The 20S proteasome core is composed of 14 alpha and 14 beta subunits that assemble into four stacked heptameric rings, resulting in a barrel-shaped structure. The two inner rings, each composed of seven catalytic beta subunits, are sandwiched by two outer rings, each composed of seven alpha subunits. The catalytic chamber with the active sites is on the inside of the barrel. Has a gated structure, the ends of the cylinder being occluded by the N-termini of the alpha-subunits. Is capped at one or both ends by the proteasome regulatory ATPase, PAN.

The protein resides in the cytoplasm. The enzyme catalyses Cleavage of peptide bonds with very broad specificity.. With respect to regulation, the formation of the proteasomal ATPase PAN-20S proteasome complex, via the docking of the C-termini of PAN into the intersubunit pockets in the alpha-rings, triggers opening of the gate for substrate entry. Interconversion between the open-gate and close-gate conformations leads to a dynamic regulation of the 20S proteasome proteolysis activity. Its function is as follows. Component of the proteasome core, a large protease complex with broad specificity involved in protein degradation. This chain is Proteasome subunit beta 1, found in Thermococcus onnurineus (strain NA1).